A 598-amino-acid chain; its full sequence is Aspartate--tRNA ligase (598 aa).

L-aspartate is bound at residue Glu-175. The interval Gln-199 to Lys-202 is aspartate. An L-aspartate-binding site is contributed by Arg-221. Residues Arg-221–Glu-223 and Gln-230 each bind ATP. His-450 contacts L-aspartate. Glu-486 is a binding site for ATP. Arg-493 is an L-aspartate binding site. Gly-538–Arg-541 provides a ligand contact to ATP.

This sequence belongs to the class-II aminoacyl-tRNA synthetase family. Type 1 subfamily. Homodimer.

Its subcellular location is the cytoplasm. The catalysed reaction is tRNA(Asp) + L-aspartate + ATP = L-aspartyl-tRNA(Asp) + AMP + diphosphate. Its function is as follows. Catalyzes the attachment of L-aspartate to tRNA(Asp) in a two-step reaction: L-aspartate is first activated by ATP to form Asp-AMP and then transferred to the acceptor end of tRNA(Asp). The chain is Aspartate--tRNA ligase from Lactiplantibacillus plantarum (strain ATCC BAA-793 / NCIMB 8826 / WCFS1) (Lactobacillus plantarum).